A 165-amino-acid chain; its full sequence is MKTSRLPIAIQQAVMRRLREKLAQANLKLGRNYPEPKLSYTQRGTSAGTAWLESYEIRLNPVLLLENSEAFIEEVVPHELAHLLVWKHFGRVAPHGKEWKWMMESVLGVPARRTHQFELQSVRRNTFPYRCKCQEHQLTVRRHNRVVRGEAIYRCVHCGEQLVAK.

One can recognise a SprT-like domain in the interval 20–163 (EKLAQANLKL…RCVHCGEQLV (144 aa)). Zn(2+) is bound at residue histidine 78. Residue glutamate 79 is part of the active site. Histidine 82 is a binding site for Zn(2+).

Belongs to the SprT family. The cofactor is Zn(2+).

Its subcellular location is the cytoplasm. The polypeptide is Protein SprT (Shigella flexneri serotype 5b (strain 8401)).